The following is a 208-amino-acid chain: UPF0637 protein BCB4264_A4063 (208 aa).

The protein belongs to the UPF0637 family.

This Bacillus cereus (strain B4264) protein is UPF0637 protein BCB4264_A4063.